Consider the following 84-residue polypeptide: Small ribosomal subunit protein bS20 (84 aa).

The protein belongs to the bacterial ribosomal protein bS20 family.

Functionally, binds directly to 16S ribosomal RNA. The protein is Small ribosomal subunit protein bS20 of Ligilactobacillus salivarius (strain UCC118) (Lactobacillus salivarius).